The sequence spans 201 residues: Small ribosomal subunit protein uS4 (201 aa).

One can recognise an S4 RNA-binding domain in the interval 91 to 157 (SRLDNVIYRA…VPFQIARETA (67 aa)).

It belongs to the universal ribosomal protein uS4 family. In terms of assembly, part of the 30S ribosomal subunit. Contacts protein S5. The interaction surface between S4 and S5 is involved in control of translational fidelity.

Its function is as follows. One of the primary rRNA binding proteins, it binds directly to 16S rRNA where it nucleates assembly of the body of the 30S subunit. In terms of biological role, with S5 and S12 plays an important role in translational accuracy. This Mycobacterium tuberculosis (strain ATCC 25177 / H37Ra) protein is Small ribosomal subunit protein uS4.